The primary structure comprises 394 residues: Na(+)/H(+) antiporter NhaA (394 aa).

Helical transmembrane passes span 24 to 44, 58 to 78, 96 to 116, 126 to 146, 155 to 175, 180 to 200, 214 to 234, 267 to 287, 300 to 320, 336 to 356, and 370 to 390; these read AGLVLMACALAAIAVANSPLA, LSVQHWVNDGLMAVFFLLVGL, TLPGVAAVGGMAIPGIVYVML, GWAIPAATDIAFALGVMSLLG, IFLAALAIIDDLGAVIIIAIF, INVATLLGAVFVFGILRSLCA, AVLWVLLLVSGVHATLAGVLL, VAFAILPIFGFANAGVSFASI, VAAGLLIGKVVGIFGAVALMV, VLGVAFLCGIGFTMSLFIGLL, and GILAGSLLAGVLGYGILRIAG.

The protein belongs to the NhaA Na(+)/H(+) (TC 2.A.33) antiporter family.

The protein localises to the cell inner membrane. It catalyses the reaction Na(+)(in) + 2 H(+)(out) = Na(+)(out) + 2 H(+)(in). Its function is as follows. Na(+)/H(+) antiporter that extrudes sodium in exchange for external protons. The protein is Na(+)/H(+) antiporter NhaA of Azorhizobium caulinodans (strain ATCC 43989 / DSM 5975 / JCM 20966 / LMG 6465 / NBRC 14845 / NCIMB 13405 / ORS 571).